The sequence spans 320 residues: Malate dehydrogenase (320 aa).

NAD(+) is bound by residues 10-15 and D34; that span reads GAGQIG. Residues R83 and R89 each coordinate substrate. Residues N96 and 119–121 contribute to the NAD(+) site; that span reads ITN. Substrate is bound by residues N121 and R152. The active-site Proton acceptor is H176.

This sequence belongs to the LDH/MDH superfamily. MDH type 3 family.

The catalysed reaction is (S)-malate + NAD(+) = oxaloacetate + NADH + H(+). In terms of biological role, catalyzes the reversible oxidation of malate to oxaloacetate. This chain is Malate dehydrogenase, found in Cereibacter sphaeroides (strain ATCC 17029 / ATH 2.4.9) (Rhodobacter sphaeroides).